The primary structure comprises 261 residues: Intermembrane phospholipid transport system permease protein MlaE (261 aa).

Over methionine 1–glutamine 12 the chain is Cytoplasmic. Residues valine 13–glycine 33 traverse the membrane as a helical segment. Topologically, residues lysine 34 to histidine 49 are periplasmic. A helical membrane pass occupies residues valine 50–leucine 70. Residues glycine 71–arginine 147 lie on the Cytoplasmic side of the membrane. A helical membrane pass occupies residues phenylalanine 148–tryptophan 168. Over glycine 169–aspartate 198 the chain is Periplasmic. Residues isoleucine 199–phenylalanine 219 traverse the membrane as a helical segment. The Cytoplasmic segment spans residues asparagine 220 to threonine 238. A helical membrane pass occupies residues valine 239–glycine 259. At alanine 260–glycine 261 the chain is on the periplasmic side.

The protein belongs to the MlaE permease family. In terms of assembly, the complex is composed of two ATP-binding proteins (MlaF), two transmembrane proteins (MlaE), two cytoplasmic solute-binding proteins (MlaB) and six periplasmic solute-binding proteins (MlaD).

The protein resides in the cell inner membrane. Part of the ABC transporter complex MlaFEDB, which is involved in a phospholipid transport pathway that maintains lipid asymmetry in the outer membrane by retrograde trafficking of phospholipids from the outer membrane to the inner membrane. Probably responsible for the translocation of the substrate across the membrane. This is Intermembrane phospholipid transport system permease protein MlaE from Haemophilus influenzae (strain ATCC 51907 / DSM 11121 / KW20 / Rd).